The following is a 192-amino-acid chain: Potassium-transporting ATPase KdpC subunit (192 aa).

A helical membrane pass occupies residues 7–27 (PLIVLFVVLAALTGLAYPAVM).

It belongs to the KdpC family. In terms of assembly, the system is composed of three essential subunits: KdpA, KdpB and KdpC.

The protein localises to the cell inner membrane. Part of the high-affinity ATP-driven potassium transport (or Kdp) system, which catalyzes the hydrolysis of ATP coupled with the electrogenic transport of potassium into the cytoplasm. This subunit acts as a catalytic chaperone that increases the ATP-binding affinity of the ATP-hydrolyzing subunit KdpB by the formation of a transient KdpB/KdpC/ATP ternary complex. The chain is Potassium-transporting ATPase KdpC subunit from Paraburkholderia xenovorans (strain LB400).